Reading from the N-terminus, the 138-residue chain is Small ribosomal subunit protein uS9 (138 aa).

Positions 100–118 (PENRPPLKTEGYLTRDPRA) are enriched in basic and acidic residues. A disordered region spans residues 100–138 (PENRPPLKTEGYLTRDPRAKERKKYGLHKARKAPQYSKR). The segment covering 119 to 138 (KERKKYGLHKARKAPQYSKR) has biased composition (basic residues).

It belongs to the universal ribosomal protein uS9 family.

The sequence is that of Small ribosomal subunit protein uS9 from Trichormus variabilis (strain ATCC 29413 / PCC 7937) (Anabaena variabilis).